Reading from the N-terminus, the 203-residue chain is Cytochrome c biogenesis ATP-binding export protein CcmA (203 aa).

An ABC transporter domain is found at 2–203; the sequence is LEALDLAGVR…KTSQTVRMGA (202 aa). An ATP-binding site is contributed by 34 to 41; it reads GENGSGKT.

Belongs to the ABC transporter superfamily. CcmA exporter (TC 3.A.1.107) family. As to quaternary structure, the complex is composed of two ATP-binding proteins (CcmA) and two transmembrane proteins (CcmB).

It is found in the cell inner membrane. The enzyme catalyses heme b(in) + ATP + H2O = heme b(out) + ADP + phosphate + H(+). Functionally, part of the ABC transporter complex CcmAB involved in the biogenesis of c-type cytochromes; once thought to export heme, this seems not to be the case, but its exact role is uncertain. Responsible for energy coupling to the transport system. The chain is Cytochrome c biogenesis ATP-binding export protein CcmA from Pseudomonas aeruginosa.